The sequence spans 878 residues: Alanine--tRNA ligase (878 aa).

Zn(2+) contacts are provided by His568, His572, Cys670, and His674.

This sequence belongs to the class-II aminoacyl-tRNA synthetase family. The cofactor is Zn(2+).

The protein resides in the cytoplasm. The enzyme catalyses tRNA(Ala) + L-alanine + ATP = L-alanyl-tRNA(Ala) + AMP + diphosphate. In terms of biological role, catalyzes the attachment of alanine to tRNA(Ala) in a two-step reaction: alanine is first activated by ATP to form Ala-AMP and then transferred to the acceptor end of tRNA(Ala). Also edits incorrectly charged Ser-tRNA(Ala) and Gly-tRNA(Ala) via its editing domain. The chain is Alanine--tRNA ligase from Latilactobacillus sakei subsp. sakei (strain 23K) (Lactobacillus sakei subsp. sakei).